Reading from the N-terminus, the 72-residue chain is Mitotic-spindle organizing protein 1 (72 aa).

This sequence belongs to the MOZART1 family. In terms of assembly, part of the gamma-tubulin complex.

It localises to the cytoplasm. Its subcellular location is the cytoskeleton. It is found in the microtubule organizing center. The protein resides in the centrosome. The protein localises to the spindle. In terms of biological role, required for gamma-tubulin complex recruitment to the centrosome. This is Mitotic-spindle organizing protein 1 (mzt1) from Xenopus tropicalis (Western clawed frog).